We begin with the raw amino-acid sequence, 312 residues long: Tumor necrosis factor receptor type 1-associated DEATH domain protein (312 aa).

The Nuclear export signal signature appears at 147–163 (LRDEELTELENALRNLT). Residues 166–200 (SAGGQGSDVQGTPAPLQSLAPSPPEEKPPPPQPGQ) are disordered. The Death domain occupies 215–305 (NLQDQQKFAR…SLAEDLLGLA (91 aa)). The tract at residues 222–289 (FARSVGLKWR…ATLQRLVEAL (68 aa)) is interaction with KRT14 and KRT18. A Nuclear localization signal motif is present at residues 231-244 (RKVGRSLQRSCRAL).

In terms of assembly, stimulation of TNF-alpha receptor TNFRSF1A leads to the formation of two distinct signaling complexes. Plasma membrane-bound complex I is composed of TNFRSF1A, TRADD, RIPK1, TRAF2 and BIRC2/c-IAP1 or BIRC3 which interacts with CHUCK/IKK-alpha, IKBKB/IKK-beta and IKBKG/IKK-gamma promoting cell survival. Subsequently, TRADD, RIPK1 and TRAF2 dissociate from TNFRSF1A and form cytoplasmic complex II with FADD and caspase CASP8 promoting cell apoptosis. Within complex I, interacts with TNFRSF1A/TNFR1, TRAF2 and kinase RIPK1. Within complex I, interacts with TRPC4AP; the interaction promotes NF-kappa B activation. UXT1 associates with complex I; the interaction prevents the formation of complex II. Within complex I Interacts with scaffold protein DAB2IP. Interacts with autophagy receptor SQSTM1. Interacts with E3 ligase TRIP12. Interacts with kinase HIPK2. Interacts with keratin KRT14. Interacts with keratin KRT18. Interacts with keratins KRT16 and KRT17. Interacts with FADD. Interacts with TOMM70. Interacts with TMC8; the interaction impairs the formation of complex I and facilites complex II formation.

The protein resides in the nucleus. The protein localises to the cytoplasm. Its subcellular location is the cytoskeleton. In terms of biological role, adapter molecule for TNFRSF1A/TNFR1 that specifically associates with the cytoplasmic domain of activated TNFRSF1A/TNFR1 mediating its interaction with FADD. Overexpression of TRADD leads to two major TNF-induced responses, apoptosis and activation of NF-kappa-B. The nuclear form acts as a tumor suppressor by preventing ubiquitination and degradation of isoform p19ARF/ARF of CDKN2A by TRIP12: acts by interacting with TRIP12, leading to disrupt interaction between TRIP12 and isoform p19ARF/ARF of CDKN2A. This chain is Tumor necrosis factor receptor type 1-associated DEATH domain protein, found in Bos taurus (Bovine).